The following is a 607-amino-acid chain: ATP-dependent DNA helicase II subunit 1 (607 aa).

The Ku domain occupies 241–452 (MDLGNDVRIG…IETMQRILRG (212 aa)). Positions 570 to 604 (IKALKVSQLKDILRDRGLRVSGKKADLLDNLTNYV) constitute an SAP domain.

This sequence belongs to the ku70 family. Heterodimer of pku70 and pku80.

It is found in the nucleus. The protein localises to the chromosome. It localises to the telomere. The catalysed reaction is ATP + H2O = ADP + phosphate + H(+). Its function is as follows. Single-stranded DNA-dependent ATP-dependent helicase. Involved in non-homologous end joining (NHEJ) DNA double strand break repair. DNA-binding is sequence-independent but has a high affinity to nicks in double-stranded DNA and to the ends of duplex DNA. Binds to naturally occurring chromosomal ends, and therefore provides chromosomal end protection. Required also for telomere recombination to repair telomeric ends in the absence of telomerase. ku70, of the ku70/ku80 heterodimer, binds to the stem loop of tlc1, the RNA component of telomerase. Required for mating-type switching. Involved in telomere maintenance. Interacts with telomeric repeats and subtelomeric sequences thereby controlling telomere length and protecting against subtelomeric rearrangement. Maintains telomeric chromatin, which is involved in silencing the expression of genes located at the telomere. The sequence is that of ATP-dependent DNA helicase II subunit 1 (pku70) from Schizosaccharomyces pombe (strain 972 / ATCC 24843) (Fission yeast).